A 241-amino-acid chain; its full sequence is MMDRLNCVCPDGEFLLIDKPLGWTSFDVVARIRTSYKKNGLKRKVGHCGTLDPLATGLLMLATGKKTKEISSIEILDKEYTGAIKLGVKTPSYDGETEEFDFCETSHLTSSEIHEAARQFLGKQQQKPPMFSATWHKGKRLYEHARQGKDIPERKSKDVEVFAFDITGIELPIVRFRLQVTKGTYVRSIANDFGERLGVGGYLTELRRTKIGDFSISQAETVSDILEKIVKTAEAHQANLT.

The active-site Nucleophile is the Asp-52.

Belongs to the pseudouridine synthase TruB family. Type 1 subfamily.

It catalyses the reaction uridine(55) in tRNA = pseudouridine(55) in tRNA. Responsible for synthesis of pseudouridine from uracil-55 in the psi GC loop of transfer RNAs. This chain is tRNA pseudouridine synthase B, found in Chloroherpeton thalassium (strain ATCC 35110 / GB-78).